A 135-amino-acid chain; its full sequence is Meiotically up-regulated gene 116 protein (135 aa).

A helical membrane pass occupies residues 20–39; it reads YFHSFHCFFLLCFTVMLCVV. Positions 81–101 are disordered; it reads QTPTKKGNKTKKKRKKEKKKE. Basic residues predominate over residues 86–98; the sequence is KGNKTKKKRKKEK.

The protein resides in the mitochondrion membrane. Has a role in meiosis. The polypeptide is Meiotically up-regulated gene 116 protein (mug116) (Schizosaccharomyces pombe (strain 972 / ATCC 24843) (Fission yeast)).